A 496-amino-acid polypeptide reads, in one-letter code: MNRSALDFRHFVDHLRRQGDLVDVHTEVDANLEIGAITRRVYERRAPAPLFHNIRDSLPGARVLGAPAGLRADRARAHSRLALHFGLPEHSGPRDIVAMLRAAMRAEPIAPRRLERGPVQENVWLGEQVDLTRFPVPLLHEQDGGRYFGTYGFHVVQTPDGSWDSWSVGRLMLVDRNTLAGPTIPTQHIGIIREQWRRLGKPTPWAMALGAPPAALAAAGMPLPEGVSEAGYVGALVGEPVEVVRTQTNGLWVPANTEIVLEGEISLDETALEGPMGEYHGYSFPIGKPQPLFHVHALSFRDQPILPICVAGTPPEENHTIWGTMISAQLLDVAQNAGLPVDMVWCSYEAATCWAVLSIDVQRLAALGTDAAAFAARVAETVFGSHAGHLVPKLILVGNDIDVTEIDQVVWALATRAHPLHDHFAFPQIRDFPMVPYLDAEDKARGSGGRLVINCLYPEQFAGQMRAATASFRHAYPTALRRRVEERWSDYGFGDA.

Trp-166 is a K(+) binding site. Prenylated FMN-binding residues include Val-168, Arg-170, Gln-187, and His-188. Mn(2+) is bound at residue His-188. Positions 218, 219, 221, and 229 each coordinate K(+). Glu-229 is a binding site for prenylated FMN. Position 229 (Glu-229) interacts with Mn(2+). Catalysis depends on Glu-278, which acts as the Proton donor. His-386 contributes to the prenylated FMN binding site.

The protein belongs to the UbiD family. UbiD-like/FDC subfamily. As to quaternary structure, homodimer. The cofactor is prenylated FMN. Mn(2+) is required as a cofactor. K(+) serves as cofactor.

The enzyme catalyses pyrrole-2-carboxylate + H(+) = 1H-pyrrole + CO2. It carries out the reaction pyrrole-2-carboxylate + H2O = 1H-pyrrole + hydrogencarbonate. Imidazole acts as a reversible inhibitor via the formation of an imidazole-prenyl-FMN adduct. Activity is light sensitive. In terms of biological role, catalyzes the prenyl-FMN-dependent decarboxylation of pyrrole-2-carboxylate (P2C). Can also catalyze the carboxylation of pyrrole in the presence of elevated concentrations of CO(2) or bicarbonate. Can accept a modest range of heteroaromatic compounds such as 3-methylpyrrole-2-carboxylate, indole-3-carboxylate and furan-2-carboxylate, and shows very low activity with thiophene-2-carboxylate. Attenuates the virulence of P.aeruginosa in a Drosophila model when overexpressed. The chain is Pyrrole-2-carboxylic acid decarboxylase from Pseudomonas aeruginosa (strain ATCC 15692 / DSM 22644 / CIP 104116 / JCM 14847 / LMG 12228 / 1C / PRS 101 / PAO1).